The sequence spans 200 residues: WASH complex subunit 3 (200 aa).

The stretch at Ser-56–Ile-76 forms a coiled coil. 2 disordered regions span residues Val-87 to Ile-130 and Asp-165 to Asp-200.

Belongs to the CCDC53 family. Component of the WASH complex.

The chain is WASH complex subunit 3 from Danio rerio (Zebrafish).